A 101-amino-acid polypeptide reads, in one-letter code: Biogenesis of lysosome-related organelles complex 1 subunit SNN1 (101 aa).

A coiled-coil region spans residues 62–100; it reads DSNEYKAQFKEVNNLQKRLQKITLRLKDLERRSSQLTTS.

This sequence belongs to the SNAPIN family. In terms of assembly, component of the biogenesis of lysosome-related organelles complex-1 (BLOC-1).

It localises to the endosome. Functionally, component of the biogenesis of lysosome-related organelles complex-1 (BLOC-1), a complex involved in endosomal cargo sorting. In Candida glabrata (strain ATCC 2001 / BCRC 20586 / JCM 3761 / NBRC 0622 / NRRL Y-65 / CBS 138) (Yeast), this protein is Biogenesis of lysosome-related organelles complex 1 subunit SNN1 (SNN1).